Here is a 208-residue protein sequence, read N- to C-terminus: Probable nicotinate-nucleotide adenylyltransferase (208 aa).

It belongs to the NadD family.

The enzyme catalyses nicotinate beta-D-ribonucleotide + ATP + H(+) = deamido-NAD(+) + diphosphate. It participates in cofactor biosynthesis; NAD(+) biosynthesis; deamido-NAD(+) from nicotinate D-ribonucleotide: step 1/1. Catalyzes the reversible adenylation of nicotinate mononucleotide (NaMN) to nicotinic acid adenine dinucleotide (NaAD). The protein is Probable nicotinate-nucleotide adenylyltransferase of Symbiobacterium thermophilum (strain DSM 24528 / JCM 14929 / IAM 14863 / T).